A 131-amino-acid chain; its full sequence is Glycine cleavage system H protein (131 aa).

The 83-residue stretch at 24-106 (TVRVGITDYA…YGEGWLVDLR (83 aa)) folds into the Lipoyl-binding domain. N6-lipoyllysine is present on lysine 65.

The protein belongs to the GcvH family. The glycine cleavage system is composed of four proteins: P, T, L and H. It depends on (R)-lipoate as a cofactor.

The glycine cleavage system catalyzes the degradation of glycine. The H protein shuttles the methylamine group of glycine from the P protein to the T protein. The sequence is that of Glycine cleavage system H protein from Mycolicibacterium smegmatis (strain ATCC 700084 / mc(2)155) (Mycobacterium smegmatis).